Reading from the N-terminus, the 362-residue chain is S-adenosylmethionine:tRNA ribosyltransferase-isomerase (362 aa).

The protein belongs to the QueA family. In terms of assembly, monomer.

The protein localises to the cytoplasm. It carries out the reaction 7-aminomethyl-7-carbaguanosine(34) in tRNA + S-adenosyl-L-methionine = epoxyqueuosine(34) in tRNA + adenine + L-methionine + 2 H(+). The protein operates within tRNA modification; tRNA-queuosine biosynthesis. Transfers and isomerizes the ribose moiety from AdoMet to the 7-aminomethyl group of 7-deazaguanine (preQ1-tRNA) to give epoxyqueuosine (oQ-tRNA). The chain is S-adenosylmethionine:tRNA ribosyltransferase-isomerase from Xanthobacter autotrophicus (strain ATCC BAA-1158 / Py2).